An 879-amino-acid chain; its full sequence is Phosphoenolpyruvate carboxylase (879 aa).

Catalysis depends on residues His141 and Lys546.

It belongs to the PEPCase type 1 family. Requires Mg(2+) as cofactor.

It carries out the reaction oxaloacetate + phosphate = phosphoenolpyruvate + hydrogencarbonate. Forms oxaloacetate, a four-carbon dicarboxylic acid source for the tricarboxylic acid cycle. This is Phosphoenolpyruvate carboxylase from Stutzerimonas stutzeri (strain A1501) (Pseudomonas stutzeri).